Reading from the N-terminus, the 455-residue chain is Glutamyl-tRNA reductase (455 aa).

Residues 49-52 (TCNR), serine 109, 114-116 (EAQ), and glutamine 120 contribute to the substrate site. Cysteine 50 (nucleophile) is an active-site residue. 190-195 (GAGAMG) serves as a coordination point for NADP(+).

It belongs to the glutamyl-tRNA reductase family. As to quaternary structure, homodimer.

The enzyme catalyses (S)-4-amino-5-oxopentanoate + tRNA(Glu) + NADP(+) = L-glutamyl-tRNA(Glu) + NADPH + H(+). It functions in the pathway porphyrin-containing compound metabolism; protoporphyrin-IX biosynthesis; 5-aminolevulinate from L-glutamyl-tRNA(Glu): step 1/2. Its function is as follows. Catalyzes the NADPH-dependent reduction of glutamyl-tRNA(Glu) to glutamate 1-semialdehyde (GSA). The chain is Glutamyl-tRNA reductase from Salinispora arenicola (strain CNS-205).